A 649-amino-acid chain; its full sequence is MPHGLSVCSRSSQLNYSQRCFYKSNSELRRGTSPRLSIPISLAPSQRSRSPPSILGHPELRPRSHSPPPPNPQNSRDFSPVQSLACSRSPAFNCDVHETVQVSKTCGSKPKIPRVDQLSTHCRRHHSLPLHLTHFSKQFNLLHARCSDVLFSSSDRRSLHSVSRTRDPVLQSHSASRVSFHRSLSLPRDLHLQDLRSDSPLHPGESPLRLVQSAPPSPILAEDFLHPLAFPRFVCDQAGILGPSPLHIDPARPTTKALSLCTPPRPAKSTSPCNNSQLPKPTAASDKPAILPTAAASTQPGLLPNSRLRRTATSHLSAPTSPPPASANKRLQRSLHLHSRSPHSSHFRPSRICANSKQQTRARLGHSKRVGQSADLVCQCPPPPPSMLPLLLLPRGKVKAPLRPTLASLSFGSHPIPYHVTSSPPLIQFQHPFPPPSATFSVSPLGVLTTAFALNPTQSAERSCDPESPTPTLGHKTTSLSRLPLPPPHSPHSAQDRASALATDVSNSETKNCPSPTVPPPFLPNHLHPLLPGTDPPTTPRQLSPSPSSLSLRTFLDSAVISCDSSPVLPPSPSPSSHSSSSFQSCTSPPRFPCYPPPPSALDLLFSSTPGTDPFPPPDTPPPHKRTIALERLRLRQCATPFHSCDDVC.

4 disordered regions span residues leucine 28–proline 80, alanine 257–aspartate 286, threonine 311–glutamine 359, and glutamine 458–leucine 550. Positions lysine 268–proline 279 are enriched in polar residues. Residues arginine 330 to proline 349 show a composition bias toward basic residues. A compositionally biased stretch (polar residues) spans aspartate 504 to serine 515. 2 stretches are compositionally biased toward low complexity: residues proline 524–glycine 533 and proline 540–leucine 550.

The protein belongs to the tymoviridae protein p69 family.

The polypeptide is 70 kDa protein (Solanum lycopersicum (Tomato)).